Here is a 368-residue protein sequence, read N- to C-terminus: MSILEKVQPIETMLPERYYTMSTEDMEKRVREIKEKMGETLFIPGHHYQKDEVVQFSDAAGDSLQLAQVAASNKDAKYIVFCGVHFMAETADMLTTDDQIVILPDMRAGCSMADMADIEQTERAWKELTKLFGDTMIPLTYVNSTAAIKAFCGRNGGATVTSSNAKQMVSWAFTQKERLVFLPDQHLGRNTAYDLGIPLDKMAVWDPHTDSLEYDGDIEEIQVILWKGHCSVHQNFTVKNIENVRKNHPDMNIIVHPECCYEVVAASDYAGSTKYIIDMIESAPSGSKWAIGTEMNLVNRIIQQHPDKEIVSLNPFMCPCLTMNRIDLPHLLWALETIERGEEINVISVDKQVTEEAVLALNRMLERV.

H46 and S63 together coordinate iminosuccinate. C110 serves as a coordination point for [4Fe-4S] cluster. Iminosuccinate-binding positions include 141-143 and S162; that span reads YVN. C230 is a binding site for [4Fe-4S] cluster. Iminosuccinate-binding positions include 256 to 258 and T273; that span reads HPE. Residue C320 participates in [4Fe-4S] cluster binding.

It belongs to the quinolinate synthase family. Type 3 subfamily. [4Fe-4S] cluster is required as a cofactor.

The protein resides in the cytoplasm. The catalysed reaction is iminosuccinate + dihydroxyacetone phosphate = quinolinate + phosphate + 2 H2O + H(+). The protein operates within cofactor biosynthesis; NAD(+) biosynthesis; quinolinate from iminoaspartate: step 1/1. Catalyzes the condensation of iminoaspartate with dihydroxyacetone phosphate to form quinolinate. The chain is Quinolinate synthase from Bacillus cereus (strain ZK / E33L).